We begin with the raw amino-acid sequence, 36 residues long: Turgencin-A (36 aa).

Cystine bridges form between Cys-8/Cys-33, Cys-12/Cys-29, and Cys-17/Cys-26. Met-10 bears the Methionine sulfoxide mark. Val-36 carries the post-translational modification Valine amide.

The protein localises to the secreted. Has antimicrobial activity against Gram-positive bacteria (C.glutamicum ATCC 13032 (MIC=0.4 uM), B.subtilis ATCC 23857 (MIC=0.4 uM) and S.aureus ATCC 9144 (MIC=6.3 uM)) and Gram-negative bacteria (E.coli ATCC 25922 (MIC=0.8 uM) and P.aeruginosa ATCC 27853 (MIC=1.6 uM)). The protein is Turgencin-A of Synoicum turgens (Colonial ascidian).